A 166-amino-acid polypeptide reads, in one-letter code: Probable chemoreceptor glutamine deamidase CheD (166 aa).

The protein belongs to the CheD family.

It carries out the reaction L-glutaminyl-[protein] + H2O = L-glutamyl-[protein] + NH4(+). Probably deamidates glutamine residues to glutamate on methyl-accepting chemotaxis receptors (MCPs), playing an important role in chemotaxis. The protein is Probable chemoreceptor glutamine deamidase CheD of Desulforamulus reducens (strain ATCC BAA-1160 / DSM 100696 / MI-1) (Desulfotomaculum reducens).